The following is a 664-amino-acid chain: Peroxisomal acyl-coenzyme A oxidase 1 (664 aa).

FAD is bound by residues Tyr135, Gln137, Thr138, Ser144, Gly177, Arg310, Gln330, Arg333, Gly401, and Thr422. The active-site Proton acceptor is the Glu424. Residue Asp426 participates in FAD binding. Cys467 and Cys576 are oxidised to a cystine. Residues 662 to 664 (ARL) carry the Microbody targeting signal motif.

This sequence belongs to the acyl-CoA oxidase family. In terms of assembly, homodimer. FAD is required as a cofactor. In terms of tissue distribution, expressed mainly in flowers and young seedlings. Lower expression in roots, leaves and bracts.

Its subcellular location is the peroxisome. It carries out the reaction a 2,3-saturated acyl-CoA + O2 = a (2E)-enoyl-CoA + H2O2. Catalyzes the desaturation of both long- and medium-chain acyl-CoAs to 2-trans-enoyl-CoAs. Most active with C14-CoA. Activity on long-chain mono-unsaturated substrates is 40% higher than with the corresponding saturated substrates. Seems to be an important factor in the general metabolism of root tips. May be involved in the biosynthesis of jasmonic acid. In Arabidopsis thaliana (Mouse-ear cress), this protein is Peroxisomal acyl-coenzyme A oxidase 1.